The following is a 581-amino-acid chain: Probable hexosyltransferase MUCI70 (581 aa).

Topologically, residues 1–58 (MTGLGVRSSSYGSLEKTGLNGVVLPIQITTTTRTKPSKMQKDREGIVHWICKFAGRKK) are cytoplasmic. A helical; Signal-anchor for type II membrane protein transmembrane segment spans residues 59–79 (VGMLLLFLISAVVFLRVLYVG). Over 80 to 581 (KGEDSQEGQG…NLPVRLPDSA (502 aa)) the chain is Lumenal. 9 N-linked (GlcNAc...) asparagine glycosylation sites follow: Asn96, Asn102, Asn119, Asn194, Asn224, Asn285, Asn382, Asn411, and Asn488. Residues 514–581 (RFARQRPPVP…NLPVRLPDSA (68 aa)) form a disordered region. Residues 520-536 (PPVPNFPPPPPSPPPPV) are compositionally biased toward pro residues. A compositionally biased stretch (basic residues) spans 553 to 571 (PPRRRGRDRRSGQRGHRKA).

Belongs to the glycosyltransferase 8 family. Expressed in siliques and seeds.

It is found in the golgi apparatus membrane. The protein operates within glycan metabolism; pectin biosynthesis. Its function is as follows. Probable glycosyltransferase involved in pectin and/or xylans biosynthesis in cell walls. Together with IRX14, required for xylan and pectin synthesis in seed coat epidermal (SCE) cells. Collaboratively with GAUT11, essential for the accumulation of seed mucilage, a gelatinous wall rich in unbranched rhamnogalacturonan I (RG I), and for shaping the surface morphology of seeds. The polypeptide is Probable hexosyltransferase MUCI70 (Arabidopsis thaliana (Mouse-ear cress)).